The chain runs to 239 residues: Pyrroloquinoline-quinone synthase (239 aa).

The protein belongs to the PqqC family.

The catalysed reaction is 6-(2-amino-2-carboxyethyl)-7,8-dioxo-1,2,3,4,7,8-hexahydroquinoline-2,4-dicarboxylate + 3 O2 = pyrroloquinoline quinone + 2 H2O2 + 2 H2O + H(+). Its pathway is cofactor biosynthesis; pyrroloquinoline quinone biosynthesis. Its function is as follows. Ring cyclization and eight-electron oxidation of 3a-(2-amino-2-carboxyethyl)-4,5-dioxo-4,5,6,7,8,9-hexahydroquinoline-7,9-dicarboxylic-acid to PQQ. This is Pyrroloquinoline-quinone synthase from Gluconobacter oxydans (strain 621H) (Gluconobacter suboxydans).